The chain runs to 330 residues: Fructose-1,6-bisphosphatase class 1 (330 aa).

Glutamate 84, aspartate 103, leucine 105, and aspartate 106 together coordinate Mg(2+). Residues 106–109 (DGSS), asparagine 196, and lysine 262 each bind substrate. Glutamate 268 is a binding site for Mg(2+).

Belongs to the FBPase class 1 family. As to quaternary structure, homotetramer. Mg(2+) is required as a cofactor.

Its subcellular location is the cytoplasm. It carries out the reaction beta-D-fructose 1,6-bisphosphate + H2O = beta-D-fructose 6-phosphate + phosphate. It participates in carbohydrate biosynthesis; gluconeogenesis. The chain is Fructose-1,6-bisphosphatase class 1 from Shewanella sp. (strain MR-7).